A 452-amino-acid chain; its full sequence is Minor capsid protein (452 aa).

Basic and acidic residues-rich tracts occupy residues 219 to 236 (VDKPEDKPKPVFDDKGKQ) and 247 to 258 (GKPDISKPGEKQ). The disordered stretch occupies residues 219-258 (VDKPEDKPKPVFDDKGKQPTDTVPPVDNGKPDISKPGEKQ).

The protein belongs to the closteroviridae minor capsid protein family.

It is found in the virion. Its function is as follows. Minor capsid protein that encapsidates the 5'-terminal portion of the viral genome. In Lettuce infectious yellows virus (isolate United States/92) (LIYV), this protein is Minor capsid protein.